Consider the following 1537-residue polypeptide: MAEQISLVDVSSSVSLRGEDSSNVALLRDVFLPDVAASDPAESSVDVQDEHSSDDSDNENEVFPKQNDFSQRRRIQNAQFEALLSKCTDADSNEAFDRAPIALSDGELSIAHLVKKQDLGNGMLDPREYQIELFERAKTQNTIAVLDTGSGKTLIAVLLLRHTILNELDDRANGKTHRVSFFLVDSVTLAYQQAAVLRNNIDQNVAHFFGAMGTDLWDKRTWDKHLQRNMVIVCTAEILNQCLLNSYVRMDQINLLIFDEAHHAKKDHPYARIIRDSYFKAQPSQRPRVFGMTASPIDTKGDITEAATRLETFLDSRIATTSKITLLREVVSRPIEKVWAYNRLEPPFATELYKLMDTRYGNIKVLEGVYRFAWNASSELGKWCSDRAWWHALADDVLPKLEGNINKLIESNTMKAEHGAVFKDIIRIREASETVKNYFFTDPELPGELSPKVQRLRMELSKHFNDTTGTKCIVFTQKRYTAKILNELFTVLNIPNLRPGVLIGVRPGDIGGMNITFRQQFLALVKFRTGEINCLFATSVAEEGLDIPDCNLVIRFDLYRTLIQYVQSRGRARHCTSTYAIMVEKDNAEHEGRLKEIREAENIMRRFCEILPEDRILHGNDHDLDSFLQEEEGRRTFTVKSTGAKLTYHSAIAILARYASSLQYEKETVPQVTYVVTIASNAYVCEVILPEKSPIRGLTGSPAMRKAVAKRSAAFDTCLLLRKNRLLDGYFNSIYHRRLPAMRNAKLAITCKRTNAYDMLLKPSIWAKQRTTPTETFYGIHMSLLPSKPLSRDHRPILLLTREKLPEFPAFSIYLDEDVETKVLSYPLKHGLQISVDKLQSLTVFTLRIFRDIFHKVYEHEVQKMPYWLAPAEAIDGRGSGKNPRDCIDWDTVSFVHNNDEITFTRNLNPESLVNRFIFDNWDGRFRYFTVAVADTLQPSDPPPPSVPRRRYMNNIMNYTLSLSKNSRARFLSSCDWNQPVLQAELVRLRRNLLDKMTTQEKEMQTECFICAEPLRISALPPSIVSTCLAFPAIISRLDSYLIALEACDELELVIRPDFALEAFTKDSDNTEEHRGQQIHFQRGMGKNYERLEFLGDCFLKMATSIALFSQNPNDDEFDYHVNRMCLICNKNLFNTAIKKQIYRYIRSRGFSRHIWYPDGLTLLHGKDHSTKLLSEGKHALGEKTIADVCEALIGASLLSGGPEHRFDMATKAVSALVDSPSHRVSCWKEYITLYTLPKYQTEKHRGSEDDLARHVEEELGYHFTYPRLLASAITHPSLPSTWGYRVPCYQRLEFLGDSLLDMVCVEDLFRRFPDRDPQWLSEHKMAMVSNKFLGALSVKLGFHRRIMAFSNPLQAQITHYVEEIETAQAESQGAVDYWVVAKDPPKCLPDMVEAYLGAIFVDSKFDFQVIEAFFERQIKPFFEDMSIYDTFANKHPTTFLHNKLTNEYGCTNYCLKAGELPTIDGAPATVLAAVIVHGNVISEARSSSSRYAKITASEKALAVLDGLLPSEFCQKYRCDCKETKNSSSVVEIGTAI.

Residues 38–68 (SDPAESSVDVQDEHSSDDSDNENEVFPKQND) form a disordered region. The 182-residue stretch at 133–314 (LFERAKTQNT…EAATRLETFL (182 aa)) folds into the Helicase ATP-binding domain. 146–153 (LDTGSGKT) is a binding site for ATP. A DEAH box motif is present at residues 259–262 (DEAH). A Helicase C-terminal domain is found at 459–618 (ELSKHFNDTT…EILPEDRILH (160 aa)). A Dicer dsRNA-binding fold domain is found at 651–741 (AIAILARYAS…NSIYHRRLPA (91 aa)). The 129-residue stretch at 891–1019 (DTVSFVHNND…ICAEPLRISA (129 aa)) folds into the PAZ domain. RNase III domains are found at residues 1043 to 1202 (IALE…LSGG) and 1253 to 1405 (ARHV…VDSK). 3 residues coordinate Mg(2+): glutamate 1294, aspartate 1391, and glutamate 1394. Residues 1439–1507 (TFLHNKLTNE…SEKALAVLDG (69 aa)) enclose the DRBM domain. Residues cysteine 1451, histidine 1478, cysteine 1519, and cysteine 1521 each coordinate Zn(2+).

This sequence belongs to the helicase family. Dicer subfamily. The cofactor is Mg(2+). It depends on Mn(2+) as a cofactor.

Functionally, dicer-like endonuclease involved in cleaving double-stranded RNA in the RNA interference (RNAi) pathway. Produces 21 to 25 bp dsRNAs (siRNAs) which target the selective destruction of homologous RNAs leading to sequence-specific suppression of gene expression, called post-transcriptional gene silencing (PTGS). Part of a broad host defense response against viral infection and transposons. The sequence is that of Dicer-like protein 1 (dcl1) from Aspergillus fumigatus (strain ATCC MYA-4609 / CBS 101355 / FGSC A1100 / Af293) (Neosartorya fumigata).